We begin with the raw amino-acid sequence, 507 residues long: Cytochrome P450 71A4 (507 aa).

Residues Val3–His23 traverse the membrane as a helical segment. Heme is bound at residue Cys448.

Belongs to the cytochrome P450 family. Heme is required as a cofactor.

The protein resides in the membrane. In terms of biological role, may have a role in maturation, such as during flavor formation or other metabolite production specific to aging tissues. The protein is Cytochrome P450 71A4 (CYP71A4) of Solanum melongena (Eggplant).